The chain runs to 352 residues: S-adenosylmethionine:tRNA ribosyltransferase-isomerase (352 aa).

The protein belongs to the QueA family. In terms of assembly, monomer.

It is found in the cytoplasm. It carries out the reaction 7-aminomethyl-7-carbaguanosine(34) in tRNA + S-adenosyl-L-methionine = epoxyqueuosine(34) in tRNA + adenine + L-methionine + 2 H(+). It participates in tRNA modification; tRNA-queuosine biosynthesis. In terms of biological role, transfers and isomerizes the ribose moiety from AdoMet to the 7-aminomethyl group of 7-deazaguanine (preQ1-tRNA) to give epoxyqueuosine (oQ-tRNA). The sequence is that of S-adenosylmethionine:tRNA ribosyltransferase-isomerase from Dechloromonas aromatica (strain RCB).